Here is a 263-residue protein sequence, read N- to C-terminus: Tryptophan synthase alpha chain (263 aa).

Active-site proton acceptor residues include Glu-47 and Asp-58.

The protein belongs to the TrpA family. Tetramer of two alpha and two beta chains.

The protein resides in the plastid. The protein localises to the chloroplast. The enzyme catalyses (1S,2R)-1-C-(indol-3-yl)glycerol 3-phosphate + L-serine = D-glyceraldehyde 3-phosphate + L-tryptophan + H2O. It functions in the pathway amino-acid biosynthesis; L-tryptophan biosynthesis; L-tryptophan from chorismate: step 5/5. The alpha subunit is responsible for the aldol cleavage of indoleglycerol phosphate to indole and glyceraldehyde 3-phosphate. The protein is Tryptophan synthase alpha chain of Antithamnion sp. (Red alga).